Consider the following 275-residue polypeptide: 4-diphosphocytidyl-2-C-methyl-D-erythritol kinase (275 aa).

K15 is a catalytic residue. ATP is bound at residue 97–107 (PMGSGLGGGSS). The active site involves D137.

Belongs to the GHMP kinase family. IspE subfamily.

The catalysed reaction is 4-CDP-2-C-methyl-D-erythritol + ATP = 4-CDP-2-C-methyl-D-erythritol 2-phosphate + ADP + H(+). The protein operates within isoprenoid biosynthesis; isopentenyl diphosphate biosynthesis via DXP pathway; isopentenyl diphosphate from 1-deoxy-D-xylulose 5-phosphate: step 3/6. Its function is as follows. Catalyzes the phosphorylation of the position 2 hydroxy group of 4-diphosphocytidyl-2C-methyl-D-erythritol. The polypeptide is 4-diphosphocytidyl-2-C-methyl-D-erythritol kinase (Pseudothermotoga lettingae (strain ATCC BAA-301 / DSM 14385 / NBRC 107922 / TMO) (Thermotoga lettingae)).